A 513-amino-acid polypeptide reads, in one-letter code: ATP synthase subunit alpha (513 aa).

ATP is bound at residue 171–178 (GDRQIGKT).

The protein belongs to the ATPase alpha/beta chains family. In terms of assembly, F-type ATPases have 2 components, CF(1) - the catalytic core - and CF(0) - the membrane proton channel. CF(1) has five subunits: alpha(3), beta(3), gamma(1), delta(1), epsilon(1). CF(0) has three main subunits: a(1), b(2) and c(9-12). The alpha and beta chains form an alternating ring which encloses part of the gamma chain. CF(1) is attached to CF(0) by a central stalk formed by the gamma and epsilon chains, while a peripheral stalk is formed by the delta and b chains.

The protein localises to the cell membrane. It catalyses the reaction ATP + H2O + 4 H(+)(in) = ADP + phosphate + 5 H(+)(out). In terms of biological role, produces ATP from ADP in the presence of a proton gradient across the membrane. The alpha chain is a regulatory subunit. This Wolbachia pipientis subsp. Culex pipiens (strain wPip) protein is ATP synthase subunit alpha.